We begin with the raw amino-acid sequence, 190 residues long: Segregation and condensation protein B (190 aa).

It belongs to the ScpB family. Homodimer. Homodimerization may be required to stabilize the binding of ScpA to the Smc head domains. Component of a cohesin-like complex composed of ScpA, ScpB and the Smc homodimer, in which ScpA and ScpB bind to the head domain of Smc. The presence of the three proteins is required for the association of the complex with DNA.

It localises to the cytoplasm. Participates in chromosomal partition during cell division. May act via the formation of a condensin-like complex containing Smc and ScpA that pull DNA away from mid-cell into both cell halves. The sequence is that of Segregation and condensation protein B from Bacillus cereus (strain ATCC 10987 / NRS 248).